A 377-amino-acid polypeptide reads, in one-letter code: MSNGIVIIGSGFAARQLVKNIRKQDASIPLTLIAADSMDEYNKPDLSHVISQGQRADDLTRQTAGEFAEQFNLRLFPHTWVTDIDAEAHVVKSQNNQWQYDKLVLATGASAFVPPVPGRELMLTLNSQQEYRACETQLRDARRVLIIGGGLIGSELAMDFCRAGKMVTLIDNAASILASLMPPEVSSRLQHRLTEMGVHLLLKSQLQGLEKTDSGILATLDRQRCIEVDAVIAATGLRPETALARRAGLTINRGVCVDSYLQTSNADIYALGDCAEINGQVLPFLQPIQLSAMVLAKNLLGNNTPLKLPAMLVKIKTPELPLHLAGETQRQDLRWQINTERQGMVARGVDDADQLRAFVVSEDRMKEAFGLLKTLSM.

It belongs to the FAD-dependent oxidoreductase family. FAD serves as cofactor.

It localises to the cytoplasm. The enzyme catalyses 2 reduced [nitric oxide reductase rubredoxin domain] + NAD(+) + H(+) = 2 oxidized [nitric oxide reductase rubredoxin domain] + NADH. Its pathway is nitrogen metabolism; nitric oxide reduction. In terms of biological role, one of at least two accessory proteins for anaerobic nitric oxide (NO) reductase. Reduces the rubredoxin moiety of NO reductase. This Escherichia coli O81 (strain ED1a) protein is Nitric oxide reductase FlRd-NAD(+) reductase.